A 511-amino-acid polypeptide reads, in one-letter code: Ribose import ATP-binding protein RbsA (511 aa).

ABC transporter domains follow at residues Phe9–Asp245 and Leu261–Arg506. Gly41–Ser48 serves as a coordination point for ATP.

It belongs to the ABC transporter superfamily. Ribose importer (TC 3.A.1.2.1) family. As to quaternary structure, the complex is composed of an ATP-binding protein (RbsA), two transmembrane proteins (RbsC) and a solute-binding protein (RbsB).

The protein localises to the cell inner membrane. The enzyme catalyses D-ribose(out) + ATP + H2O = D-ribose(in) + ADP + phosphate + H(+). In terms of biological role, part of the ABC transporter complex RbsABC involved in ribose import. Responsible for energy coupling to the transport system. The polypeptide is Ribose import ATP-binding protein RbsA (Rhodopirellula baltica (strain DSM 10527 / NCIMB 13988 / SH1)).